The primary structure comprises 284 residues: MESLSELSVQFSQLSMFPFFDMAHYVVSVMSAREQAGALDIAARSPMASWFSAMLYCFGGGILSSILLAEPPIAVLSNTTNIMLASTIWYMVYYFPYDLFYNCFFFLPIRLIIAGMKEVTRTWKILSGVTHAHSHYKDALLVMITIGWARGAGGGLISNFEQLVRGVWKPESNEFLKMSYPVKVTLIGAVLFTLQHGHYLPISRHNLMLIYTMFLVLIKVTMMLTHSTASPFLPLETPLQRILFGQRQKPSEVRQSASSSGAKGKPSKKTLDKDSGEQSKKKDS.

At 1 to 15 (MESLSELSVQFSQLS) the chain is on the lumenal side. The helical transmembrane segment at 16-33 (MFPFFDMAHYVVSVMSAR) threads the bilayer. At 34-46 (EQAGALDIAARSP) the chain is on the cytoplasmic side. The helical transmembrane segment at 47–68 (MASWFSAMLYCFGGGILSSILL) threads the bilayer. Topologically, residues 69-79 (AEPPIAVLSNT) are lumenal. Residues 80–99 (TNIMLASTIWYMVYYFPYDL) traverse the membrane as a helical segment. The Cytoplasmic portion of the chain corresponds to 100 to 102 (FYN). The helical transmembrane segment at 103 to 121 (CFFFLPIRLIIAGMKEVTR) threads the bilayer. 2 residues coordinate a 1,2-diacyl-sn-glycero-3-phospho-(1D-myo-inositol-4,5-bisphosphate): Lys-117 and Arg-121. At 122–137 (TWKILSGVTHAHSHYK) the chain is on the lumenal side. A helical transmembrane segment spans residues 138–155 (DALLVMITIGWARGAGGG). Residues 156 to 177 (LISNFEQLVRGVWKPESNEFLK) are Cytoplasmic-facing. Residues 178–195 (MSYPVKVTLIGAVLFTLQ) traverse the membrane as a helical segment. Over 196–206 (HGHYLPISRHN) the chain is Lumenal. The helical transmembrane segment at 207-224 (LMLIYTMFLVLIKVTMML) threads the bilayer. Topologically, residues 225-284 (THSTASPFLPLETPLQRILFGQRQKPSEVRQSASSSGAKGKPSKKTLDKDSGEQSKKKDS) are cytoplasmic. A disordered region spans residues 246–284 (QRQKPSEVRQSASSSGAKGKPSKKTLDKDSGEQSKKKDS). Residues 269–284 (KTLDKDSGEQSKKKDS) are compositionally biased toward basic and acidic residues.

It belongs to the TMEM38 family. As to quaternary structure, homotrimer; conformation seems to be controled by binding to diacylglycerol (DAG).

It is found in the endoplasmic reticulum membrane. It carries out the reaction K(+)(in) = K(+)(out). Its activity is regulated as follows. Channel activity is activated by increased cytosolic Ca(2+) levels and blocked by luminal high Ca(2+) levels. In terms of biological role, intracellular monovalent cation channel required for maintenance of rapid intracellular calcium release. Acts as a potassium counter-ion channel that functions in synchronization with calcium release from intracellular stores. Activated by increased cytosolic Ca(2+) levels. The protein is Trimeric intracellular cation channel type B-A (tmem38b-a) of Xenopus laevis (African clawed frog).